A 394-amino-acid polypeptide reads, in one-letter code: Elongation factor Tu (394 aa).

The tr-type G domain occupies 10–204; it reads KPHVNVGTIG…ALDTYIPEPE (195 aa). The G1 stretch occupies residues 19 to 26; sequence GHVDHGKT. GTP is bound at residue 19–26; sequence GHVDHGKT. Residue Thr-26 coordinates Mg(2+). The interval 60 to 64 is G2; it reads GITIN. The segment at 81–84 is G3; sequence DCPG. GTP contacts are provided by residues 81-85 and 136-139; these read DCPGH and NKCD. Residues 136–139 form a G4 region; that stretch reads NKCD. Residues 174-176 form a G5 region; it reads SAL.

The protein belongs to the TRAFAC class translation factor GTPase superfamily. Classic translation factor GTPase family. EF-Tu/EF-1A subfamily. Monomer.

The protein resides in the cytoplasm. It carries out the reaction GTP + H2O = GDP + phosphate + H(+). In terms of biological role, GTP hydrolase that promotes the GTP-dependent binding of aminoacyl-tRNA to the A-site of ribosomes during protein biosynthesis. The polypeptide is Elongation factor Tu (Shewanella sediminis (strain HAW-EB3)).